The following is a 487-amino-acid chain: Sodium-coupled neutral amino acid symporter 1 (487 aa).

The Cytoplasmic segment spans residues 1–74; it reads MMHFKSGLEL…EYIPGTTSLG (74 aa). A Phosphoserine modification is found at serine 6. Position 11 is a phosphothreonine (threonine 11). Phosphoserine is present on residues serine 25, serine 28, serine 49, and serine 52. Phosphothreonine is present on threonine 54. At serine 56 the chain carries Phosphoserine. The helical transmembrane segment at 75-97 threads the bilayer; that stretch reads MSVFNLSNAIMGSGILGLAFALA. At 98–112 the chain is on the extracellular side; sequence NTGILLFLVLLTSVT. Residues 113 to 133 traverse the membrane as a helical segment; the sequence is LLSIYSINLLLICSKETGCMV. The Cytoplasmic portion of the chain corresponds to 134-147; it reads YEKLGEQVFGTTGK. A helical transmembrane segment spans residues 148–168; it reads FVIFGATSLQNTGAMLSYLFI. At 169–188 the chain is on the extracellular side; that stretch reads VKNELPSAIKFLMGKEETFS. A helical transmembrane segment spans residues 189–211; sequence AWYVDGRVLVVIVTFGIILPLCL. The Cytoplasmic portion of the chain corresponds to 212-216; that stretch reads LKNLG. A helical membrane pass occupies residues 217–237; that stretch reads YLGYTSGFSLSCMVFFLIVVI. Residues 238-275 lie on the Extracellular side of the membrane; it reads YKKFQIPCIVPELNSTISANSTNADTCTPKYVTLNSKT. Cysteine 245 and cysteine 264 are oxidised to a cystine. N-linked (GlcNAc...) asparagine glycans are attached at residues asparagine 251 and asparagine 257. The helical transmembrane segment at 276 to 296 threads the bilayer; the sequence is VYALPTIAFAFVCHPSVLPIY. Topologically, residues 297 to 312 are cytoplasmic; sequence SELKDRSQKKMQMVSN. A helical transmembrane segment spans residues 313–333; that stretch reads ISFFAMFVMYFLTAIFGYLTF. Topologically, residues 334 to 350 are extracellular; it reads YDNVQSDLLHKYQGKDD. A helical transmembrane segment spans residues 351 to 371; that stretch reads ILILTVRLAVIVAVILTVPVL. The Cytoplasmic segment spans residues 372 to 393; it reads FFTVRSSLFELAKKTKFNLCRH. Residues 394 to 414 form a helical membrane-spanning segment; it reads TVVTCILLVVINLLVISIPSM. Topologically, residues 415-416 are extracellular; it reads KD. The chain crosses the membrane as a helical span at residues 417–437; sequence IFGVVGVTSANMLIFILPSSL. The Cytoplasmic segment spans residues 438 to 452; the sequence is YLKITDQDGDKGTQR. A helical membrane pass occupies residues 453–473; it reads IWAALFLGLGVLFSLVSIPLV. The Extracellular portion of the chain corresponds to 474 to 487; that stretch reads IYDWACSSSSDEGH.

The protein belongs to the amino acid/polyamine transporter 2 family. N-glycosylation plays an important role in the L-glutamine transport.

It is found in the cell membrane. It carries out the reaction L-glutamine(in) + Na(+)(in) = L-glutamine(out) + Na(+)(out). The enzyme catalyses L-alanine(in) + Na(+)(in) = L-alanine(out) + Na(+)(out). It catalyses the reaction L-asparagine(in) + Na(+)(in) = L-asparagine(out) + Na(+)(out). The catalysed reaction is L-histidine(in) + Na(+)(in) = L-histidine(out) + Na(+)(out). It carries out the reaction L-serine(in) + Na(+)(in) = L-serine(out) + Na(+)(out). The enzyme catalyses L-cysteine(in) + Na(+)(in) = L-cysteine(out) + Na(+)(out). It catalyses the reaction L-methionine(in) + Na(+)(in) = L-methionine(out) + Na(+)(out). The catalysed reaction is glycine(in) + Na(+)(in) = glycine(out) + Na(+)(out). It carries out the reaction L-threonine(in) + Na(+)(in) = L-threonine(out) + Na(+)(out). The enzyme catalyses L-proline(in) + Na(+)(in) = L-proline(out) + Na(+)(out). With respect to regulation, inhibited by alpha-(methylamino)isobutyric acid (MeAIB). Inhibited by lithium, potassium, choline ions, N-methylglucamine. The pH dependence has an allosteric effect on the transport. Functionally, symporter that cotransports short-chain neutral amino acids and sodium ions from the extraccellular to the intracellular side of the cell membrane. The transport is elctrogenic, pH dependent and driven by the Na(+) electrochemical gradient. Participates in the astroglia-derived glutamine transport into GABAergic interneurons for neurotransmitter GABA de novo synthesis. May also contributes to amino acid transport in placental trophoblast. Regulates synaptic plasticity. The protein is Sodium-coupled neutral amino acid symporter 1 of Pongo abelii (Sumatran orangutan).